A 223-amino-acid chain; its full sequence is Ribonuclease HII (223 aa).

The RNase H type-2 domain maps to L32–S223. Positions 38, 39, and 130 each coordinate a divalent metal cation.

It belongs to the RNase HII family. Mn(2+) serves as cofactor. Mg(2+) is required as a cofactor.

It localises to the cytoplasm. The catalysed reaction is Endonucleolytic cleavage to 5'-phosphomonoester.. In terms of biological role, endonuclease that specifically degrades the RNA of RNA-DNA hybrids. The protein is Ribonuclease HII of Bartonella henselae (strain ATCC 49882 / DSM 28221 / CCUG 30454 / Houston 1) (Rochalimaea henselae).